We begin with the raw amino-acid sequence, 341 residues long: S-adenosylmethionine:tRNA ribosyltransferase-isomerase (341 aa).

Belongs to the QueA family. As to quaternary structure, monomer.

Its subcellular location is the cytoplasm. The catalysed reaction is 7-aminomethyl-7-carbaguanosine(34) in tRNA + S-adenosyl-L-methionine = epoxyqueuosine(34) in tRNA + adenine + L-methionine + 2 H(+). It participates in tRNA modification; tRNA-queuosine biosynthesis. In terms of biological role, transfers and isomerizes the ribose moiety from AdoMet to the 7-aminomethyl group of 7-deazaguanine (preQ1-tRNA) to give epoxyqueuosine (oQ-tRNA). The sequence is that of S-adenosylmethionine:tRNA ribosyltransferase-isomerase from Chlorobium chlorochromatii (strain CaD3).